We begin with the raw amino-acid sequence, 172 residues long: Large ribosomal subunit protein bL17 (172 aa).

Positions 140 to 160 (LKAEAKAKREEKKPAKKEEKP) are enriched in basic and acidic residues. A disordered region spans residues 140–172 (LKAEAKAKREEKKPAKKEEKPKKAKKEKAAASN).

Belongs to the bacterial ribosomal protein bL17 family. Part of the 50S ribosomal subunit. Contacts protein L32.

The sequence is that of Large ribosomal subunit protein bL17 from Leptospira biflexa serovar Patoc (strain Patoc 1 / Ames).